The primary structure comprises 161 residues: Endoribonuclease YbeY (161 aa).

The Zn(2+) site is built by His-127, His-131, and His-137.

This sequence belongs to the endoribonuclease YbeY family. Zn(2+) is required as a cofactor.

Its subcellular location is the cytoplasm. Its function is as follows. Single strand-specific metallo-endoribonuclease involved in late-stage 70S ribosome quality control and in maturation of the 3' terminus of the 16S rRNA. In Listeria monocytogenes serotype 4a (strain HCC23), this protein is Endoribonuclease YbeY.